We begin with the raw amino-acid sequence, 577 residues long: Cell adhesion molecule CEACAM20 (577 aa).

Positions 1–30 (MELAGFHCCSWTVILLSALLPTTWRPPAAA) are cleaved as a signal peptide. At 31 to 430 (HFIHRADLLS…LQSSSMSPGA (400 aa)) the chain is on the extracellular side. Ig-like C2-type domains lie at 48 to 137 (PLAK…ASLT), 142 to 223 (PDPV…TNLS), 239 to 324 (PNIE…LKLT), and 329 to 415 (PDQV…ASVL). Cys-72 and Cys-120 are joined by a disulfide. N-linked (GlcNAc...) asparagine glycosylation is found at Asn-78 and Asn-102. Intrachain disulfides connect Cys-259/Cys-307 and Cys-358/Cys-399. Asn-289 carries an N-linked (GlcNAc...) asparagine glycan. Residues 431–451 (IAGIVIGILVAIALAIGLGYF) traverse the membrane as a helical segment. Residues 452 to 577 (LYSTKDRWTR…SLYCKITPSA (126 aa)) are Cytoplasmic-facing. Residues 461–568 (RRRSASDTTS…YEKLLNSNHS (108 aa)) form a disordered region. A compositionally biased stretch (polar residues) spans 474–484 (IPPTSVMQSTP). Basic and acidic residues predominate over residues 516-526 (DSPEQFYEKKP). Residues 536–551 (KPLPQIPKQPLMPPGP) are compositionally biased toward pro residues. Tyr-559 and Tyr-570 each carry phosphotyrosine.

The protein belongs to the immunoglobulin superfamily. CEA family. As to quaternary structure, interacts (via extracellular domain) with PTPRH (via extracellular domain); the interaction dephosphorylates CEACAM20. Interacts (phosphorylated form) with SYK (via SH2 domains); the interaction further enhances CEACAM20 phosphorylation. Phosphorylated on tyrosine residues by SYK, SRC and FYN in vitro. Strongly expressed in the small intestine and colon (at protein level). Minimal expression in other tissues (at protein level). Highly expressed in cecum, colon, ileum, jejunum, and testis, and also detected at lower levels in salivary gland and thymus.

Its subcellular location is the cell projection. The protein localises to the microvillus membrane. It localises to the apical cell membrane. In terms of biological role, together with the tyrosine-protein kinase SYK, enhances production of the cytokine CXCL8/IL-8 via the NFKB pathway and may thus have a role in the intestinal immune response. The polypeptide is Cell adhesion molecule CEACAM20 (Mus musculus (Mouse)).